A 916-amino-acid polypeptide reads, in one-letter code: DNA repair endonuclease XPF (916 aa).

The tract at residues 1 to 457 (MESGQPARRI…EVWMKFRKED (457 aa)) is helicase-like. 2 leucine-zipper regions span residues 233 to 254 (LNACLKELKCHNPSLEVEDLSL) and 270 to 298 (LDPLWHQLGAKTKSLVQDLKILRTLLQYL). At K289 the chain carries N6-acetyllysine. Positions 460 to 487 (KRIRKSHKRPKDPQNKERASTKERTLKK) are disordered. The segment covering 470-483 (KDPQNKERASTKER) has biased composition (basic and acidic residues). The Nuclear localization signal motif lies at 486 to 491 (KKKKRK). K500 participates in a covalent cross-link: Glycyl lysine isopeptide (Lys-Gly) (interchain with G-Cter in SUMO2). Disordered regions lie at residues 502–526 (EELEEEGDVEEGYRREISSSPESCP) and 660–679 (TASADVSTDTRKAGGQEQNG). Residue S521 is modified to Phosphoserine. A nuclease region spans residues 658 to 813 (RGTASADVST…PSPHATAELF (156 aa)). An ERCC4 domain is found at 683–763 (SIVVDMREFR…RPVLLIEFDP (81 aa)). Residue S764 is modified to Phosphoserine. A hhH2, dimerization with ERCC1 region spans residues 837-905 (TLPESEKYNP…QLYDFIHTSF (69 aa)). Residue K911 is modified to N6-acetyllysine.

Belongs to the XPF family. Heterodimer composed of ERCC1 and ERCC4/XPF. Interacts with SLX4/BTBD12; this interaction is direct and links the ERCC1-ERCC4/XPF complex to SLX4, which may coordinate the action of the structure-specific endonuclease during DNA repair. The cofactor is Mg(2+). Acetylation at Lys-911 by KAT5 promotes interaction with ERCC1 by disrupting a salt bridge between Glu-907 and Lys-911, thereby exposing a second binding site for ERCC1. Deacetylated by SIRT1.

The protein localises to the nucleus. It localises to the chromosome. In terms of biological role, catalytic component of a structure-specific DNA repair endonuclease responsible for the 5-prime incision during DNA repair, and which is essential for nucleotide excision repair (NER) and interstrand cross-link (ICL) repair. The chain is DNA repair endonuclease XPF from Homo sapiens (Human).